A 641-amino-acid polypeptide reads, in one-letter code: Transcriptional activator of proteases prtT (641 aa).

A DNA-binding region (zn(2)-C6 fungal-type) is located at residues 52 to 81; the sequence is CNTCRKLKTRCDLDPRGHACRRCLSLRIDC.

It belongs to the prtT family.

The protein localises to the nucleus. Its function is as follows. Transcription factor required for protein utilization and degradation. Regulates transcription of major secreted proteases including a serine alkaline protease (alp1) and a metalloprotease (NpI). The protein is Transcriptional activator of proteases prtT (prtT) of Aspergillus oryzae (strain ATCC 42149 / RIB 40) (Yellow koji mold).